Reading from the N-terminus, the 245-residue chain is PF03932 family protein CutC (245 aa).

It belongs to the CutC family.

It localises to the cytoplasm. This Rhizobium meliloti (strain 1021) (Ensifer meliloti) protein is PF03932 family protein CutC.